The following is a 139-amino-acid chain: uncharacterized protein (139 aa).

The HTH cro/C1-type domain maps to 19–73 (IRLRRTMLGMSQEKLGESLGITFQQIQKYEKGTNRVGASRLQNISQILNVPVSFF). Residues 30 to 49 (QEKLGESLGITFQQIQKYEK) constitute a DNA-binding region (H-T-H motif).

This is an uncharacterized protein from Rhizobium meliloti (strain 1021) (Ensifer meliloti).